We begin with the raw amino-acid sequence, 654 residues long: Endoplasmic reticulum chaperone BiP (654 aa).

An N-terminal signal peptide occupies residues 1-18 (MKLSLVAAVLLLLCAARA). The segment at 1-80 (MKLSLVAAVL…EGERLIGDAA (80 aa)) is required for interaction with ELAPOR1. 36–39 (GTTY) is an ATP binding site. Serine 86 carries the post-translational modification Phosphoserine. ATP is bound at residue lysine 96. Lysine 125 is subject to N6-acetyllysine. The segment at 125 to 280 (KPYIQVDIGG…KKKTGKDVRK (156 aa)) is nucleotide-binding (NBD). Tyrosine 160 bears the 3'-nitrotyrosine mark. Lysine 213 is subject to N6-acetyllysine. 227-229 (GGT) lines the ATP pocket. Lysine 271 is modified (N6-acetyllysine). Residue 293–300 (EKAKRALS) coordinates ATP. The residue at position 326 (lysine 326) is an N6-acetyllysine. Lysine 352 is covalently cross-linked (Glycyl lysine isopeptide (Lys-Gly) (interchain with G-Cter in SUMO2)). Residue lysine 353 is modified to N6-acetyllysine; alternate. Lysine 353 is covalently cross-linked (Glycyl lysine isopeptide (Lys-Gly) (interchain with G-Cter in SUMO1); alternate). 364 to 367 (GSTR) contacts ATP. The interval 409-419 (QDTGDLVLLDV) is interdomain linker. The substrate-binding (SBD) stretch occupies residues 420–500 (CPLTLGIETV…PRGVPQIEVT (81 aa)). Lysine 447 carries the post-translational modification N6-succinyllysine. Arginine 492 carries the post-translational modification Omega-N-methylarginine. Threonine 518 bears the O-AMP-threonine; alternate mark. Threonine 518 carries the phosphothreonine; alternate modification. Lysine 585 bears the N6,N6,N6-trimethyllysine; by METTL21A; in vitro mark. Lysine 585 is subject to N6,N6-dimethyllysine; alternate. Residue lysine 585 is modified to N6-methyllysine; alternate. Lysine 591 bears the N6-methyllysine mark. Positions 632-654 (SKLYGSAGPPPTGEEDTSERDEL) are disordered. Threonine 643 and threonine 648 each carry phosphothreonine. Residues 644-654 (GEEDTSERDEL) show a composition bias toward acidic residues. At serine 649 the chain carries Phosphoserine. The short motif at 651 to 654 (RDEL) is the Prevents secretion from ER element.

It belongs to the heat shock protein 70 family. As to quaternary structure, monomer and homooligomer; homooligomerization via the interdomain linker inactivates the chaperone activity and acts as a storage of HSPA5/BiP molecules. Interacts with DNAJC1 (via J domain). Component of an EIF2 complex at least composed of CELF1/CUGBP1, CALR, CALR3, EIF2S1, EIF2S2, HSP90B1 and HSPA5. Part of a large chaperone multiprotein complex comprising DNAJB11, HSP90B1, HSPA5, HYOU, PDIA2, PDIA4, PDIA6, PPIB, SDF2L1, UGGT1 and very small amounts of ERP29, but not, or at very low levels, CALR nor CANX. Interacts with TMEM132A and TRIM21. May form a complex with ERLEC1, OS9, SEL1L and SYVN1. Interacts with DNAJC10. Interacts with DNAJB9/ERdj4; leading to recruit HSPA5/BiP to ERN1/IRE1. Interacts with ERN1/IRE1 (via luminal domain); the interaction takes place following interaction with DNAJB9/ERdj4 and leads to inactivate ERN1/IRE1, the interaction also competitively inhibits ERN1 interaction with MANF. Interacts directly with MANF (via SAP domain); the interaction inhibits ATP binding to HSPA5/BiP and subsequent nucleotide exchange. Interacts with EIF2AK3/PERK (via luminal domain); interaction leads to inactivate EIF2AK3/PERK. Interacts with MX1. Interacts with METTL23. Interacts with CEMIP; the interaction induces calcium leakage from the endoplasmic reticulum and cell migration. Interacts with PCSK4 form; the interaction takes place in the endoplasmic reticulum. Interacts with CIPC. Interacts with CCDC88B (via C-terminus); the interaction opposes ERN1-mediated JNK activation, protecting against apoptosis. Interacts with INPP5K; necessary for INPP5K localization at the endoplasmic reticulum. Interacts with MANF; the interaction is direct. Interacts with LOXL2; leading to activate the ERN1/IRE1-XBP1 pathway of the unfolded protein response. Interacts with CLU under stressed condition; interaction increases CLU protein stability; facilitates its retrotranslocation and redistribution to the mitochondria; cooperatively suppress stress-induced apoptosis by stabilizing mitochondrial membrane integrity. Interacts with CCDC47. Interacts with CLN3. Interacts with ELAPOR1; may regulate the function of HSPA5 in apoptosis and cell proliferation. Interacts with CASP7. Interacts with ILDR2; the interaction stabilizes ILDR2 expression. Interacts with ADAM7. In terms of processing, in unstressed cells, AMPylation at Thr-518 by FICD inactivates the chaperome activity: AMPylated form is locked in a relatively inert state and only weakly stimulated by J domain-containing proteins. In response to endoplasmic reticulum stress, de-AMPylation by the same protein, FICD, restores the chaperone activity.

It is found in the endoplasmic reticulum lumen. The protein resides in the melanosome. Its subcellular location is the cytoplasm. It localises to the cell surface. The catalysed reaction is ATP + H2O = ADP + phosphate + H(+). The chaperone activity is regulated by ATP-induced allosteric coupling of the nucleotide-binding (NBD) and substrate-binding (SBD) domains. In the ADP-bound and nucleotide-free (apo) states, the two domains have little interaction. In contrast, in the ATP-bound state the two domains are tightly coupled, which results in drastically accelerated kinetics in both binding and release of polypeptide substrates. J domain-containing co-chaperones (DNAJB9/ERdj4 or DNAJC10/ERdj5) stimulate the ATPase activity and are required for efficient substrate recognition by HSPA5/BiP. Homooligomerization inactivates participating HSPA5/BiP protomers and probably act as reservoirs to store HSPA5/BiP molecules when they are not needed by the cell. Endoplasmic reticulum chaperone that plays a key role in protein folding and quality control in the endoplasmic reticulum lumen. Involved in the correct folding of proteins and degradation of misfolded proteins via its interaction with DNAJC10/ERdj5, probably to facilitate the release of DNAJC10/ERdj5 from its substrate. Acts as a key repressor of the EIF2AK3/PERK and ERN1/IRE1-mediated unfolded protein response (UPR). In the unstressed endoplasmic reticulum, recruited by DNAJB9/ERdj4 to the luminal region of ERN1/IRE1, leading to disrupt the dimerization of ERN1/IRE1, thereby inactivating ERN1/IRE1. Also binds and inactivates EIF2AK3/PERK in unstressed cells. Accumulation of misfolded protein in the endoplasmic reticulum causes release of HSPA5/BiP from ERN1/IRE1 and EIF2AK3/PERK, allowing their homodimerization and subsequent activation. Plays an auxiliary role in post-translational transport of small presecretory proteins across endoplasmic reticulum (ER). May function as an allosteric modulator for SEC61 channel-forming translocon complex, likely cooperating with SEC62 to enable the productive insertion of these precursors into SEC61 channel. Appears to specifically regulate translocation of precursors having inhibitory residues in their mature region that weaken channel gating. May also play a role in apoptosis and cell proliferation. This Ictidomys tridecemlineatus (Thirteen-lined ground squirrel) protein is Endoplasmic reticulum chaperone BiP.